The following is a 350-amino-acid chain: UBX domain-containing protein 2B (350 aa).

Positions 1–29 (MEERENSEEGDDGAGEEEEEDQGSGEDGG) are enriched in acidic residues. Residues 1-46 (MEERENSEEGDDGAGEEEEEDQGSGEDGGEVGAEREQEAELKDSLR) form a disordered region. Over residues 32–45 (GAEREQEAELKDSL) the composition is skewed to basic and acidic residues. Positions 160–225 (EIQILLKLWS…MEDHQDQEYI (66 aa)) constitute an SEP domain. Residues 271–348 (EHVPTTKIQI…DILNTVILQR (78 aa)) enclose the UBX domain.

This sequence belongs to the NSFL1C family.

It is found in the nucleus. It localises to the cytoplasm. The protein localises to the cytosol. Its subcellular location is the endoplasmic reticulum. The protein resides in the golgi apparatus. It is found in the cytoskeleton. It localises to the microtubule organizing center. The protein localises to the centrosome. Adapter protein required for Golgi and endoplasmic reticulum biogenesis. Involved in Golgi and endoplasmic reticulum maintenance during interphase and in their reassembly at the end of mitosis. Regulates the centrosomal levels of kinase aurka-a/Aurora A during mitotic progression by promoting aurka-a removal from centrosomes in prophase. Also, regulates spindle orientation during mitosis. In Xenopus laevis (African clawed frog), this protein is UBX domain-containing protein 2B (ubxn2b).